A 149-amino-acid polypeptide reads, in one-letter code: Calmodulin-3 (149 aa).

Residue Ala-2 is modified to N-acetylalanine. 4 EF-hand domains span residues 8–43 (DQIA…LGQN), 44–79 (PTEA…KMKD), 81–116 (DSEE…LGEK), and 117–149 (LTDE…MMAK). The Ca(2+) site is built by Asp-21, Asp-23, Asp-25, Cys-27, Glu-32, Asp-57, Asp-59, Asn-61, Thr-63, Glu-68, Asp-94, Asp-96, Asn-98, and Glu-105. N6,N6,N6-trimethyllysine is present on Lys-116. Ca(2+)-binding residues include Asp-130, Asp-132, Asp-134, Gln-136, and Glu-141.

It belongs to the calmodulin family.

Its function is as follows. Calmodulin mediates the control of a large number of enzymes, ion channels and other proteins by Ca(2+). Among the enzymes to be stimulated by the calmodulin-Ca(2+) complex are a number of protein kinases and phosphatases. The sequence is that of Calmodulin-3 (CAM3) from Oryza sativa subsp. japonica (Rice).